Consider the following 127-residue polypeptide: Holo-[acyl-carrier-protein] synthase (127 aa).

The Mg(2+) site is built by Asp-8 and Glu-60.

Belongs to the P-Pant transferase superfamily. AcpS family. The cofactor is Mg(2+).

The protein resides in the cytoplasm. It carries out the reaction apo-[ACP] + CoA = holo-[ACP] + adenosine 3',5'-bisphosphate + H(+). Functionally, transfers the 4'-phosphopantetheine moiety from coenzyme A to a Ser of acyl-carrier-protein. This is Holo-[acyl-carrier-protein] synthase from Marinomonas sp. (strain MWYL1).